A 154-amino-acid polypeptide reads, in one-letter code: Myoglobin (154 aa).

The Globin domain maps to 2–148; that stretch reads GLSDGEWQLV…FRNDIAAKYK (147 aa). Position 4 is a phosphoserine (Ser4). His65 is a nitrite binding site. His65 serves as a coordination point for O2. Thr68 carries the post-translational modification Phosphothreonine. Residue His94 participates in heme b binding.

Belongs to the globin family. In terms of assembly, monomeric.

Its subcellular location is the cytoplasm. It localises to the sarcoplasm. It catalyses the reaction Fe(III)-heme b-[protein] + nitric oxide + H2O = Fe(II)-heme b-[protein] + nitrite + 2 H(+). The catalysed reaction is H2O2 + AH2 = A + 2 H2O. Its function is as follows. Monomeric heme protein which primary function is to store oxygen and facilitate its diffusion within muscle tissues. Reversibly binds oxygen through a pentacoordinated heme iron and enables its timely and efficient release as needed during periods of heightened demand. Depending on the oxidative conditions of tissues and cells, and in addition to its ability to bind oxygen, it also has a nitrite reductase activity whereby it regulates the production of bioactive nitric oxide. Under stress conditions, like hypoxia and anoxia, it also protects cells against reactive oxygen species thanks to its pseudoperoxidase activity. This chain is Myoglobin (MB), found in Lepilemur mustelinus (Weasel sportive lemur).